A 407-amino-acid polypeptide reads, in one-letter code: Spore germination protein KC (407 aa).

An N-terminal signal peptide occupies residues 1 to 20 (MVRKCLLAVLMLLSVIVLPG). Cysteine 21 carries the N-palmitoyl cysteine lipid modification. A lipid anchor (S-diacylglycerol cysteine) is attached at cysteine 21.

It belongs to the GerABKC lipoprotein family.

Its subcellular location is the cell membrane. Functionally, involved in the germination response to the combination of glucose, fructose, L-asparagine, and KCl. The protein is Spore germination protein KC (gerKC) of Bacillus subtilis (strain 168).